Consider the following 2327-residue polypeptide: Kielin/chordin-like protein (2327 aa).

The first 19 residues, 1–19 (MNTLLWTILLPLLFSFCVC), serve as a signal peptide directing secretion. The interval 250 to 294 (LPLPYSLSGERQMEDEEIQREPRAPDLSDTDHYQQQQSEVPAQLL) is disordered. A compositionally biased stretch (basic and acidic residues) spans 268-281 (QREPRAPDLSDTDH). Positions 291 to 332 (AQLLAKDDRLQRLEEAVKGLTNMIDMIKSQNADLQARVIALE) form a coiled coil. 28 VWFC domains span residues 339-400 (STCV…SVGP), 401-438 (CMSC…PLCA), 439-493 (TGCS…AKCQ), 494-553 (QGCE…PSCP), 554-610 (VCEL…LDCS), 611-669 (ACEM…SQCQ), 670-728 (SCMD…PMCD), 729-786 (GCLY…PRCE), 787-847 (GCEY…PSCD), 848-907 (VCDF…PVCK), 908-966 (VCVQ…PVCD), 967-1025 (SCSY…AKCP), 1026-1083 (DCRY…NNCN), 1084-1142 (GCNY…PQCP), 1146-1203 (ADCP…RSCD), 1204-1260 (GCLM…KECQ), 1261-1319 (DCQY…PVCD), 1321-1377 (CSYN…CPIC), 1378-1439 (QGCH…DGCN), 1440-1495 (YSGR…PRCT), 1496-1555 (GICK…PVCD), 1556-1614 (RCFY…RECP), 1615-1673 (VCRY…PRCR), 1674-1731 (GCVY…PVCA), 1732-1799 (DCIS…SSCA), 1800-1860 (QALS…PVCN), 1861-1924 (ECVV…HECQ), and 1928-1988 (VSCW…PHCI). The region spanning 1992–2168 (ATCIAFGDPH…SSNDSSSSCW (177 aa)) is the VWFD domain. 2 cysteine pairs are disulfide-bonded: C1994-C2126 and C2016-C2167. The TIL domain maps to 2259–2319 (CPHDRGYVFD…ESHCIPPESC (61 aa)).

It localises to the secreted. Functionally, may be a signaling molecule that mediates inductive activities of the embryonic midline. Able to dorsalize mesoderm. This is Kielin/chordin-like protein (kcp) from Xenopus laevis (African clawed frog).